The chain runs to 763 residues: Lysine-specific histone demethylase 1 homolog 2 (763 aa).

Positions 53–152 constitute an SWIRM domain; it reads QRETETEALI…FGVSAAFPAS (100 aa). The FAD site is built by Glu-192, Arg-194, Arg-200, and Glu-571.

Belongs to the flavin monoamine oxidase family. It depends on FAD as a cofactor.

Its function is as follows. Probable histone demethylase. The protein is Lysine-specific histone demethylase 1 homolog 2 of Oryza sativa subsp. japonica (Rice).